The primary structure comprises 75 residues: Cytochrome c oxidase subunit 6C (75 aa).

The Mitochondrial matrix segment spans residues 1–13 (MASEVLVKPQMRG). A helical membrane pass occupies residues 14-54 (LLARRLRIHMVGAFLVSLGVAALYKFGVAEPRKKAYADFYK). The Mitochondrial intermembrane segment spans residues 55–75 (NYSAEKDFEEMKKAGLFRSIK).

This sequence belongs to the cytochrome c oxidase subunit 6c family. As to quaternary structure, component of the cytochrome c oxidase (complex IV, CIV), a multisubunit enzyme composed of 14 subunits. The complex is composed of a catalytic core of 3 subunits MT-CO1, MT-CO2 and MT-CO3, encoded in the mitochondrial DNA, and 11 supernumerary subunits COX4I, COX5A, COX5B, COX6A, COX6B, COX6C, COX7A, COX7B, COX7C, COX8 and NDUFA4, which are encoded in the nuclear genome. The complex exists as a monomer or a dimer and forms supercomplexes (SCs) in the inner mitochondrial membrane with NADH-ubiquinone oxidoreductase (complex I, CI) and ubiquinol-cytochrome c oxidoreductase (cytochrome b-c1 complex, complex III, CIII), resulting in different assemblies (supercomplex SCI(1)III(2)IV(1) and megacomplex MCI(2)III(2)IV(2)).

It localises to the mitochondrion inner membrane. Its pathway is energy metabolism; oxidative phosphorylation. In terms of biological role, component of the cytochrome c oxidase, the last enzyme in the mitochondrial electron transport chain which drives oxidative phosphorylation. The respiratory chain contains 3 multisubunit complexes succinate dehydrogenase (complex II, CII), ubiquinol-cytochrome c oxidoreductase (cytochrome b-c1 complex, complex III, CIII) and cytochrome c oxidase (complex IV, CIV), that cooperate to transfer electrons derived from NADH and succinate to molecular oxygen, creating an electrochemical gradient over the inner membrane that drives transmembrane transport and the ATP synthase. Cytochrome c oxidase is the component of the respiratory chain that catalyzes the reduction of oxygen to water. Electrons originating from reduced cytochrome c in the intermembrane space (IMS) are transferred via the dinuclear copper A center (CU(A)) of subunit 2 and heme A of subunit 1 to the active site in subunit 1, a binuclear center (BNC) formed by heme A3 and copper B (CU(B)). The BNC reduces molecular oxygen to 2 water molecules using 4 electrons from cytochrome c in the IMS and 4 protons from the mitochondrial matrix. This is Cytochrome c oxidase subunit 6C (COX6C) from Plecturocebus donacophilus (Bolivian gray titi monkey).